Here is a 130-residue protein sequence, read N- to C-terminus: Small ribosomal subunit protein uS9 (130 aa).

It belongs to the universal ribosomal protein uS9 family.

The chain is Small ribosomal subunit protein uS9 from Mycoplasmoides gallisepticum (strain R(low / passage 15 / clone 2)) (Mycoplasma gallisepticum).